We begin with the raw amino-acid sequence, 396 residues long: UPF0046 protein T07D4.2 (396 aa).

Positions 73 to 94 are disordered; that stretch reads SRRGSIASGIPMDKKTRRKLSN.

Belongs to the UPF0046 family.

This is UPF0046 protein T07D4.2 from Caenorhabditis elegans.